Consider the following 1302-residue polypeptide: MEELSADEIRRRRLARLAGGQTSQPTTPLTSPQRENPPGPPIAASAPGPSQSLGLNVHNMTPATSPIGASGVAHRSQSSEGVSSLSSSPSNSLETQSQSLSRSQSMDIDGVSCEKSMSQVDVDSGIENMEVDENDRREKRSLSDKEPSSGPEVSEEQALQLVCKIFRVSWKDRDRDVIFLSSLSAQFKQNPKEVFSDFKDLIGQILMEVLMMSTQTRDENPFASLTATSQPIAAAARSPDRNLLLNTGSNPGTSPMFCSVASFGASSLSSLYESSPAPTPSFWSSVPVMGPSLASPSRAASQLAVPSTPLSPHSAASGTAAGSQPSSPRYRPYTVTHPWASSGVSILSSSPSPPALASSPQAVPASSSRQRPSSTGPPLPPASPSATSRRPSSLRISPSLGASGGASNWDSYSDHFTIETCKETDMLNYLIECFDRVGIEEKKAPKMCSQPAVSQLLSNIRSQCISHTALVLQGSLTQPRSLQQPSFLVPYMLCRNLPYGFIQELVRTTHQDEEVFKQIFIPILQGLALAAKECSLDSDYFKYPLMALGELCETKFGKTHPVCNLVASLRLWLPKSLSPGCGRELQRLSYLGAFFSFSVFAEDDVKVVEKYFSGPAITLENTRVVSQSLQHYLELGRQELFKILHSILLNGETREAALSYMAAVVNANMKKAQMQTDDRLVSTDGFMLNFLWVLQQLSTKIKLETVDPTYIFHPRCRITLPNDETRVNATMEDVNDWLTELYGDQPPFSEPKFPTECFFLTLHAHHLSILPSCRRYIRRLRAIRELNRTVEDLKNNESQWKDSPLATRHREMLKRCKTQLKKLVRCKACADAGLLDESFLRRCLNFYGLLIQLLLRILDPAYPDITLPLNSDVPKVFAALPEFYVEDVAEFLFFIVQYSPQALYEPCTQDIVMFLVVMLCNQNYIRNPYLVAKLVEVMFMTNPAVQPRTQKFFEMIENHPLSTKLLVPSLMKFYTDVEHTGATSEFYDKFTIRYHISTIFKSLWQNIAHHGTFMEEFNSGKQFVRYINMLINDTTFLLDESLESLKRIHEVQEEMKNKEQWDQLPRDQQQARQSQLAQDERVSRSYLALATETVDMFHILTKQVQKPFLRPELGPRLAAMLNFNLQQLCGPKCRDLKVENPEKYGFEPKKLLDQLTDIYLQLDCARFAKAIADDQRSYSKELFEEVISKMRKAGIKSTIAIEKFKLLAEKVEEIVAKNARAEIDYSDAPDEFRDPLMDTLMTDPVRLPSGTIMDRSIILRHLLNSPTDPFNRQTLTESMLEPVPELKEQIQAWMREKQNSDH.

An N-acetylmethionine modification is found at methionine 1. Residues 1–155 form a disordered region; the sequence is MEELSADEIR…EPSSGPEVSE (155 aa). Low complexity predominate over residues 16–33; the sequence is RLAGGQTSQPTTPLTSPQ. Residues serine 23 and serine 31 each carry the phosphoserine modification. Residues 51–64 show a composition bias toward polar residues; the sequence is QSLGLNVHNMTPAT. Low complexity predominate over residues 76 to 99; the sequence is SQSSEGVSSLSSSPSNSLETQSQS. Serine 84, serine 88, serine 90, serine 101, serine 103, serine 105, and serine 124 each carry phosphoserine. Over residues 134–147 the composition is skewed to basic and acidic residues; the sequence is NDRREKRSLSDKEP. Phosphoserine is present on serine 238. Polar residues predominate over residues 299–327; it reads AASQLAVPSTPLSPHSAASGTAAGSQPSS. The tract at residues 299–406 is disordered; it reads AASQLAVPST…SPSLGASGGA (108 aa). A compositionally biased stretch (low complexity) spans 340 to 374; it reads ASSGVSILSSSPSPPALASSPQAVPASSSRQRPSS. Residue serine 383 is modified to Phosphoserine. Residues 384–400 show a composition bias toward low complexity; sequence PSATSRRPSSLRISPSL. Residues serine 803 and serine 969 each carry the phosphoserine modification. The interval 1057 to 1077 is disordered; it reads NKEQWDQLPRDQQQARQSQLA. Residues 1066–1077 show a composition bias toward low complexity; sequence RDQQQARQSQLA. Positions 1227–1300 constitute a U-box domain; that stretch reads DAPDEFRDPL…QAWMREKQNS (74 aa). The residue at position 1265 (serine 1265) is a Phosphoserine.

Belongs to the ubiquitin conjugation factor E4 family. As to quaternary structure, interacts with VCP/p97. Interacts with STUB1/CHIP and UNC45B. Post-translationally, proteolytically cleaved by caspases during apoptosis. Cleaved efficiently at Asp-123 by caspase-6 and granzyme B. Cleaved with approximately 10-fold less efficiency at Asp-109 by caspase-3 and caspase-7. In terms of tissue distribution, expressed in differentiated myotubes (at protein level). Highest expression in ovary, testis, heart and skeletal muscle. Expression is low in colon, thymus and peripheral blood leukocytes. Almost undetectable in lung and spleen.

The protein resides in the cytoplasm. It is found in the nucleus. The catalysed reaction is S-ubiquitinyl-[E2 ubiquitin-conjugating enzyme]-L-cysteine + [acceptor protein]-L-lysine = [E2 ubiquitin-conjugating enzyme]-L-cysteine + N(6)-ubiquitinyl-[acceptor protein]-L-lysine.. It participates in protein modification; protein ubiquitination. In terms of biological role, ubiquitin-protein ligase that probably functions as an E3 ligase in conjunction with specific E1 and E2 ligases. May also function as an E4 ligase mediating the assembly of polyubiquitin chains on substrates ubiquitinated by another E3 ubiquitin ligase. May regulate myosin assembly in striated muscles together with STUB1 and VCP/p97 by targeting myosin chaperone UNC45B for proteasomal degradation. The chain is Ubiquitin conjugation factor E4 B from Homo sapiens (Human).